The sequence spans 274 residues: MCATLRPMETLGFCMLSPSTLPLRKWGIRLCRAGYRALGALLGTGVLVCCASSTNMTVSNDYPPKELGVLNAYTVDRLRTAISPRDFTFVFDPPIDTVLMQFKFLLDGITLYLERKDRTALREAIEKYLGEYEAQTLTREKSSERAYFGTTTPLMTWGILGSAHNATPTMRFEYQFITDDRPYFIIANRTIPGANGYNCPAVRIALSPAQCSQVMQYLDQGNLDALLEEMAQSFETFDTQQDPKKTPETDKNAAYKGKEKKGKKEERGPRSIMK.

The interval 235–274 (ETFDTQQDPKKTPETDKNAAYKGKEKKGKKEERGPRSIMK) is disordered. The span at 241-274 (QDPKKTPETDKNAAYKGKEKKGKKEERGPRSIMK) shows a compositional bias: basic and acidic residues.

This is an uncharacterized protein from Treponema pallidum (strain Nichols).